The sequence spans 107 residues: uncharacterized protein (107 aa).

A run of 3 helical transmembrane segments spans residues 16–36 (VIPCTLSSPSFVLMAVISESL), 47–67 (IISLIESAVTSLSYVTWHSLV), and 85–105 (LIVLVQALHVIPCTASITSLI).

It is found in the membrane. This is an uncharacterized protein from Saccharomyces cerevisiae (strain ATCC 204508 / S288c) (Baker's yeast).